A 672-amino-acid polypeptide reads, in one-letter code: DNA ligase (672 aa).

NAD(+)-binding positions include 35–39, 84–85, and E116; these read DAEYD and SL. K118 acts as the N6-AMP-lysine intermediate in catalysis. Residues R139, E179, K295, and K319 each contribute to the NAD(+) site. Zn(2+) contacts are provided by C413, C416, C431, and C436. Residues 593–672 form the BRCT domain; the sequence is PRSAPLTGKT…EEFLRLAGKI (80 aa).

This sequence belongs to the NAD-dependent DNA ligase family. LigA subfamily. Mg(2+) is required as a cofactor. The cofactor is Mn(2+).

It catalyses the reaction NAD(+) + (deoxyribonucleotide)n-3'-hydroxyl + 5'-phospho-(deoxyribonucleotide)m = (deoxyribonucleotide)n+m + AMP + beta-nicotinamide D-nucleotide.. Its function is as follows. DNA ligase that catalyzes the formation of phosphodiester linkages between 5'-phosphoryl and 3'-hydroxyl groups in double-stranded DNA using NAD as a coenzyme and as the energy source for the reaction. It is essential for DNA replication and repair of damaged DNA. This is DNA ligase from Syntrophus aciditrophicus (strain SB).